We begin with the raw amino-acid sequence, 671 residues long: DNA ligase (671 aa).

NAD(+) is bound by residues 34–38, 83–84, and glutamate 113; these read DSEYD and SL. Residue lysine 115 is the N6-AMP-lysine intermediate of the active site. Positions 136, 170, 286, and 310 each coordinate NAD(+). Positions 404, 407, 422, and 427 each coordinate Zn(2+). The 82-residue stretch at 590–671 folds into the BRCT domain; it reads EEAGVFAGKT…FTQAVEQSEQ (82 aa).

Belongs to the NAD-dependent DNA ligase family. LigA subfamily. Requires Mg(2+) as cofactor. Mn(2+) is required as a cofactor.

The enzyme catalyses NAD(+) + (deoxyribonucleotide)n-3'-hydroxyl + 5'-phospho-(deoxyribonucleotide)m = (deoxyribonucleotide)n+m + AMP + beta-nicotinamide D-nucleotide.. DNA ligase that catalyzes the formation of phosphodiester linkages between 5'-phosphoryl and 3'-hydroxyl groups in double-stranded DNA using NAD as a coenzyme and as the energy source for the reaction. It is essential for DNA replication and repair of damaged DNA. The protein is DNA ligase of Shouchella clausii (strain KSM-K16) (Alkalihalobacillus clausii).